A 69-amino-acid polypeptide reads, in one-letter code: Conotoxin reg3.6 (69 aa).

A signal peptide spans 1–20; that stretch reads MMSKLGVLLTICLLLFPLSA. A propeptide spanning residues 21–52 is cleaved from the precursor; sequence LPLDGDQPADQPAERVQDISPDQNPLFHLVKR. 3 disulfides stabilise this stretch: C54–C68, C55–C66, and C60–C69.

The protein belongs to the conotoxin M superfamily. In terms of tissue distribution, expressed by the venom duct.

The protein resides in the secreted. The chain is Conotoxin reg3.6 from Conus regius (Crown cone).